We begin with the raw amino-acid sequence, 282 residues long: Undecaprenyl-diphosphatase (282 aa).

8 consecutive transmembrane segments (helical) span residues 1-21 (MNLF…FLPI), 40-60 (GAAF…IYFA), 89-109 (WMIA…KHEI), 112-132 (VLRS…VLVV), 153-173 (LSWT…IPGS), 196-216 (FSFL…LYQT), 228-248 (LNLA…IAFL), and 258-278 (GIFI…IGTG).

The protein belongs to the UppP family.

The protein localises to the cell inner membrane. The catalysed reaction is di-trans,octa-cis-undecaprenyl diphosphate + H2O = di-trans,octa-cis-undecaprenyl phosphate + phosphate + H(+). Functionally, catalyzes the dephosphorylation of undecaprenyl diphosphate (UPP). Confers resistance to bacitracin. In Chlorobaculum tepidum (strain ATCC 49652 / DSM 12025 / NBRC 103806 / TLS) (Chlorobium tepidum), this protein is Undecaprenyl-diphosphatase.